The chain runs to 456 residues: Glycerol-3-phosphate acyltransferase 4 (456 aa).

The signal sequence occupies residues 1–37; that stretch reads MFLLLPFDSLIVNLLGISLTVLFTLLLVFIIVPAIFG. 2 helical membrane-spanning segments follow: residues 156–176 and 180–200; these read ISLR…CFLL and IALA…VGYL. N-linked (GlcNAc...) asparagine glycosylation occurs at Asn-247. An HXXXXD motif motif is present at residues 248 to 253; it reads HTSPID. Residues Asn-327, Asn-328, and Asn-362 are each glycosylated (N-linked (GlcNAc...) asparagine).

The protein belongs to the 1-acyl-sn-glycerol-3-phosphate acyltransferase family. As to expression, highly expressed in testis.

The protein resides in the endoplasmic reticulum membrane. The enzyme catalyses sn-glycerol 3-phosphate + an acyl-CoA = a 1-acyl-sn-glycero-3-phosphate + CoA. It catalyses the reaction dodecanoyl-CoA + sn-glycerol 3-phosphate = 1-dodecanoyl-sn-glycerol 3-phosphate + CoA. It carries out the reaction sn-glycerol 3-phosphate + hexadecanoyl-CoA = 1-hexadecanoyl-sn-glycero-3-phosphate + CoA. The catalysed reaction is sn-glycerol 3-phosphate + octadecanoyl-CoA = 1-octadecanoyl-sn-glycero-3-phosphate + CoA. The enzyme catalyses sn-glycerol 3-phosphate + (9Z)-octadecenoyl-CoA = 1-(9Z-octadecenoyl)-sn-glycero-3-phosphate + CoA. It catalyses the reaction (9Z,12Z)-octadecadienoyl-CoA + sn-glycerol 3-phosphate = 1-(9Z,12Z)-octadecadienoyl-sn-glycero-3-phosphate + CoA. The protein operates within phospholipid metabolism; CDP-diacylglycerol biosynthesis; CDP-diacylglycerol from sn-glycerol 3-phosphate: step 1/3. In terms of biological role, converts glycerol-3-phosphate to 1-acyl-sn-glycerol-3-phosphate (lysophosphatidic acid or LPA) by incorporating an acyl moiety at the sn-1 position of the glycerol backbone. Active against both saturated and unsaturated long-chain fatty acyl-CoAs. Protects cells against lipotoxicity. In Mus musculus (Mouse), this protein is Glycerol-3-phosphate acyltransferase 4.